The following is a 105-amino-acid chain: Large ribosomal subunit protein uL24 (105 aa).

It belongs to the universal ribosomal protein uL24 family. Part of the 50S ribosomal subunit.

In terms of biological role, one of two assembly initiator proteins, it binds directly to the 5'-end of the 23S rRNA, where it nucleates assembly of the 50S subunit. Its function is as follows. One of the proteins that surrounds the polypeptide exit tunnel on the outside of the subunit. The polypeptide is Large ribosomal subunit protein uL24 (Leptothrix cholodnii (strain ATCC 51168 / LMG 8142 / SP-6) (Leptothrix discophora (strain SP-6))).